The primary structure comprises 437 residues: RNA-binding motif, single-stranded-interacting protein 3 (437 aa).

A disordered region spans residues 28 to 57 (YAPAPHPMAPPSPSTNSSSNNSSNNSSGEQ). A compositionally biased stretch (pro residues) spans 31–40 (APHPMAPPSP). The span at 41–54 (STNSSSNNSSNNSS) shows a compositional bias: low complexity. RRM domains lie at 61–134 (TNLY…MAKQ) and 140–225 (TNLY…FADG). A compositionally biased stretch (polar residues) spans 399–422 (TSPQTVAPSSQDTSGQQQQIAVDT). A disordered region spans residues 399–437 (TSPQTVAPSSQDTSGQQQQIAVDTSNEHAPAYSYQQSKP).

As to expression, expressed in fetal brain, fetal lung, fetal liver, heart, brain, placenta, lung, liver, muscle, kidney and pancreas.

The protein localises to the cytoplasm. Binds poly(A) and poly(U) oligoribonucleotides. The sequence is that of RNA-binding motif, single-stranded-interacting protein 3 (RBMS3) from Homo sapiens (Human).